The sequence spans 365 residues: 5-hydroxytryptamine receptor 1E (365 aa).

The Extracellular portion of the chain corresponds to Met1–Glu21. Residues Asn2 and Asn5 are each glycosylated (N-linked (GlcNAc...) asparagine). The helical transmembrane segment at Lys22–Met45 threads the bilayer. Residues Ala46–Tyr59 lie on the Cytoplasmic side of the membrane. Residues Leu60 to Val84 form a helical membrane-spanning segment. The Extracellular segment spans residues Met85–Tyr92. Residues Phe93 to Leu118 traverse the membrane as a helical segment. Cysteines 95 and 173 form a disulfide. Positions 102 and 106 each coordinate serotonin. The short motif at Asp119 to Tyr121 is the DRY motif; important for ligand-induced conformation changes element. The Cytoplasmic segment spans residues Asp119–Arg138. The helical transmembrane segment at Ala139–Pro157 threads the bilayer. Residues Leu158–His179 lie on the Extracellular side of the membrane. Residues Val180 to Tyr203 form a helical membrane-spanning segment. At Arg204 to Arg291 the chain is on the cytoplasmic side. A helical membrane pass occupies residues Ile292–Leu316. Topologically, residues Ser317–Ser322 are extracellular. The chain crosses the membrane as a helical span at residues Ser323 to Thr345. The NPxxY motif; important for ligand-induced conformation changes and signaling motif lies at Asn340–Tyr344. The Cytoplasmic portion of the chain corresponds to Ser346–Thr365.

The protein belongs to the G-protein coupled receptor 1 family. In terms of tissue distribution, detected in brain.

The protein resides in the cell membrane. G-protein coupled receptor for 5-hydroxytryptamine (serotonin). Also functions as a receptor for various alkaloids and psychoactive substances. Ligand binding causes a conformation change that triggers signaling via guanine nucleotide-binding proteins (G proteins) and modulates the activity of downstream effectors, such as adenylate cyclase. HTR1E is coupled to G(i)/G(o) G alpha proteins and mediates inhibitory neurotransmission by inhibiting adenylate cyclase activity. The polypeptide is 5-hydroxytryptamine receptor 1E (Homo sapiens (Human)).